A 370-amino-acid chain; its full sequence is MTQKTLLNDTHRALGAKMVDFGGWDMPIHYGSQLDEHHLVRRESGVFDVSHMTVVDLRGDQVKPFLRRLLANSVDKLKVTGKALYSCMLNPRGGVIDDLIVYYLGDDFFRMVVNASTREKDLAWLREQAAPFGVTVEQRPDLAILAVQGPQARDIVIGLAREADRAALTKLGRFAALQAQSDDGIELFVARTGYTGEDGFEILLPQDAVVAFWNRLLAAGVKPAGLGARDTLRLEAGMNLYGQDMDEAISPYEAALAWTVSLDEGRDFIGRDVLEAQKAAGNARQMIGLVMDEKGVLRHGQAVTTAGGQGEILSGTFSPTLAKGIAFARVPAGELGQVTVDIRGRQVPVRVVKFPFVREGQAQPGVLGDA.

It belongs to the GcvT family. As to quaternary structure, the glycine cleavage system is composed of four proteins: P, T, L and H.

The catalysed reaction is N(6)-[(R)-S(8)-aminomethyldihydrolipoyl]-L-lysyl-[protein] + (6S)-5,6,7,8-tetrahydrofolate = N(6)-[(R)-dihydrolipoyl]-L-lysyl-[protein] + (6R)-5,10-methylene-5,6,7,8-tetrahydrofolate + NH4(+). The glycine cleavage system catalyzes the degradation of glycine. The chain is Aminomethyltransferase from Stenotrophomonas maltophilia (strain R551-3).